The following is a 289-amino-acid chain: Melatonin receptor type 1B (289 aa).

The Cytoplasmic portion of the chain corresponds to 1–2; that stretch reads GN. The chain crosses the membrane as a helical span at residues 3-23; the sequence is AFVVSLALADLVVALYPYPLV. The Extracellular segment spans residues 24 to 41; it reads LLAIFHNGWTLGEMHCKV. A disulfide bridge links cysteine 39 with cysteine 116. Residues 42-62 traverse the membrane as a helical segment; it reads SGFVMGLSVIGSIFNITAIAI. Residues 63-81 lie on the Cytoplasmic side of the membrane; sequence NRYCYICHSFAYDKVYSCW. Residues 82-102 form a helical membrane-spanning segment; sequence NTMLYVSLIWVLTVIATVPNF. Topologically, residues 103–126 are extracellular; the sequence is FVGSLKYDPRIYSCTFVQTASSYY. A helical membrane pass occupies residues 127–147; the sequence is TIAVVVIHFIVPITVVSFCYL. Residues 148 to 179 are Cytoplasmic-facing; the sequence is RIWVLVLQVRRRVKSETKPRLKPSDFRNFLTM. A helical membrane pass occupies residues 180–200; that stretch reads FVVFVIFAFCWAPLNFIGLAV. Over 201–213 the chain is Extracellular; it reads AINPSEMAPKVPE. The chain crosses the membrane as a helical span at residues 214–234; sequence WLFIISYFMAYFNSCLNAIIY. At 235 to 289 the chain is on the cytoplasmic side; it reads GLLNQNFRNEYKRILMSLWMPRLFFQDTSKGGTDGQKSKPSPALNNNDQMKTDTL. The interval 264 to 289 is disordered; that stretch reads KGGTDGQKSKPSPALNNNDQMKTDTL.

It belongs to the G-protein coupled receptor 1 family. As to expression, brain and kidney, with trace levels in lungs.

It is found in the cell membrane. In terms of biological role, high affinity receptor for melatonin. The activity of this receptor is mediated by pertussis toxin sensitive G proteins that inhibits adenylate cyclase activity. This chain is Melatonin receptor type 1B, found in Gallus gallus (Chicken).